A 335-amino-acid chain; its full sequence is Adenosine deaminase (335 aa).

Residues H12 and H14 each coordinate Zn(2+). Substrate is bound by residues H14 and D16. H197 lines the Zn(2+) pocket. The active-site Proton donor is E200. D278 provides a ligand contact to Zn(2+).

It belongs to the metallo-dependent hydrolases superfamily. Adenosine and AMP deaminases family. Adenosine deaminase subfamily. The cofactor is Zn(2+).

The enzyme catalyses adenosine + H2O + H(+) = inosine + NH4(+). It carries out the reaction 2'-deoxyadenosine + H2O + H(+) = 2'-deoxyinosine + NH4(+). In terms of biological role, catalyzes the hydrolytic deamination of adenosine and 2-deoxyadenosine. The polypeptide is Adenosine deaminase (Clostridium botulinum (strain Okra / Type B1)).